Here is a 251-residue protein sequence, read N- to C-terminus: Imidazole glycerol phosphate synthase subunit HisF (251 aa).

Residues Asp11 and Asp130 contribute to the active site.

This sequence belongs to the HisA/HisF family. Heterodimer of HisH and HisF.

The protein resides in the cytoplasm. It carries out the reaction 5-[(5-phospho-1-deoxy-D-ribulos-1-ylimino)methylamino]-1-(5-phospho-beta-D-ribosyl)imidazole-4-carboxamide + L-glutamine = D-erythro-1-(imidazol-4-yl)glycerol 3-phosphate + 5-amino-1-(5-phospho-beta-D-ribosyl)imidazole-4-carboxamide + L-glutamate + H(+). The protein operates within amino-acid biosynthesis; L-histidine biosynthesis; L-histidine from 5-phospho-alpha-D-ribose 1-diphosphate: step 5/9. Its function is as follows. IGPS catalyzes the conversion of PRFAR and glutamine to IGP, AICAR and glutamate. The HisF subunit catalyzes the cyclization activity that produces IGP and AICAR from PRFAR using the ammonia provided by the HisH subunit. The polypeptide is Imidazole glycerol phosphate synthase subunit HisF (Pelagibacter ubique (strain HTCC1062)).